Consider the following 138-residue polypeptide: Putative pre-16S rRNA nuclease (138 aa).

The protein belongs to the YqgF nuclease family.

The protein localises to the cytoplasm. Could be a nuclease involved in processing of the 5'-end of pre-16S rRNA. This is Putative pre-16S rRNA nuclease from Karelsulcia muelleri (strain GWSS) (Sulcia muelleri).